A 159-amino-acid polypeptide reads, in one-letter code: ATP synthase subunit b (159 aa).

A helical membrane pass occupies residues 2–22 (NISIPQIIAAILNFIILLLIV).

It belongs to the ATPase B chain family. As to quaternary structure, F-type ATPases have 2 components, F(1) - the catalytic core - and F(0) - the membrane proton channel. F(1) has five subunits: alpha(3), beta(3), gamma(1), delta(1), epsilon(1). F(0) has three main subunits: a(1), b(2) and c(10-14). The alpha and beta chains form an alternating ring which encloses part of the gamma chain. F(1) is attached to F(0) by a central stalk formed by the gamma and epsilon chains, while a peripheral stalk is formed by the delta and b chains.

The protein localises to the cell membrane. Functionally, f(1)F(0) ATP synthase produces ATP from ADP in the presence of a proton or sodium gradient. F-type ATPases consist of two structural domains, F(1) containing the extramembraneous catalytic core and F(0) containing the membrane proton channel, linked together by a central stalk and a peripheral stalk. During catalysis, ATP synthesis in the catalytic domain of F(1) is coupled via a rotary mechanism of the central stalk subunits to proton translocation. Its function is as follows. Component of the F(0) channel, it forms part of the peripheral stalk, linking F(1) to F(0). This chain is ATP synthase subunit b, found in Clostridium botulinum (strain Loch Maree / Type A3).